The sequence spans 448 residues: tRNA modification GTPase MnmE (448 aa).

Residues arginine 22, glutamate 79, and lysine 118 each contribute to the (6S)-5-formyl-5,6,7,8-tetrahydrofolate site. The 158-residue stretch at 214-371 (GLHVVLAGQP…LRQELLRIAG (158 aa)) folds into the TrmE-type G domain. Asparagine 224 contacts K(+). Residues 224–229 (NVGKSS), 243–249 (TPIAGTT), and 268–271 (DTAG) each bind GTP. Serine 228 provides a ligand contact to Mg(2+). K(+)-binding residues include threonine 243, isoleucine 245, and threonine 248. Threonine 249 lines the Mg(2+) pocket. Lysine 448 is a binding site for (6S)-5-formyl-5,6,7,8-tetrahydrofolate.

Belongs to the TRAFAC class TrmE-Era-EngA-EngB-Septin-like GTPase superfamily. TrmE GTPase family. In terms of assembly, homodimer. Heterotetramer of two MnmE and two MnmG subunits. The cofactor is K(+).

It is found in the cytoplasm. Its function is as follows. Exhibits a very high intrinsic GTPase hydrolysis rate. Involved in the addition of a carboxymethylaminomethyl (cmnm) group at the wobble position (U34) of certain tRNAs, forming tRNA-cmnm(5)s(2)U34. This chain is tRNA modification GTPase MnmE, found in Dechloromonas aromatica (strain RCB).